A 962-amino-acid chain; its full sequence is MAHQGMDTALFERRLRPIYDNLEVGNNRKALQESEKLLRKHPSMLCARALKGLALLRLGRYEESHGCLQAVAEDKPTDDSTLQVLSFCYREMEQLNKIVELYQHAVKKNPGNEELLAHLFISYVRVEDYKAQQAVALQLYKAQPKNAYYFWSVISVVFQGIRGPESAVPEKRKIYLGLAQRMVEKHIREGKLESEQEAFLYLHILKLQKKFQEAWEFLTGELCAKLYPGAPVSMKFELLKVLGNWRELNELLQQLLDADRDRWDYYKEYIQSCFEILKLPITEGATEEKKFSLSACQEFLQGIIDSSERKKRGPYLARLELHQRMRAHQLPADQLIGDFDELVVEYFSLFADKSCCTHDIALFLPSVSMKQRQALANKLLLESGVSSTSLPMNKEQMQKHICALQISRMCGAHIDLPIDHLLAFYTALKLHYEHGRSTFGNKLLSTEMGPSDPYALLAANVMYDISLRENKSDYLFEALCLLQYVLRNSTSNFHVKLLSLKIYHMFGCLLGAQEMYEYLDIKQIQLDSMGYVHCQLLPLCGRFSGARNSYDTTMKFFTNSYKERLEYIALTYRFCTFSKMEEFLNFKERLTNSLQYVTCSLEAQICDLVSCYANVHQNLSTYTVMSIEPAEDRIAWHELSDNRDLDAIIRWDPLHQVDADAERKDSFDQEIEVLQLRSLMLRLYATFIDLYHPPPITKPSLSDGSKEETPAPAVESATSTLELLRDSWTGLYQRLRLMNYKPLPQQFLVNLLPTRLHLLLELPYERFFDDLAQLVLDLHSGAASLAAHCKKVGDNVIAVMELCVRTIEESNEWNNKDGLWKRRYQQQKVAASLEMLSLYAFLLSVLNDKLQVSSKTKVKKKQGDNKTQDTPQPVSEKERSQMVQELMRQLKHKLEACDAAIRTWKAPVLPRDLSSFMADMSLKPEVEATLIGDVSATFKDSHELMVTELRNLLKDKIRMVAK.

TPR repeat units lie at residues 45–78, 79–112, and 523–560; these read LCAR…KPTD, DSTL…NPGN, and QIQL…FTNS. Residues 856-880 are disordered; that stretch reads TKVKKKQGDNKTQDTPQPVSEKERS.

The protein belongs to the MDM20/NAA25 family. In terms of assembly, component of the N-terminal acetyltransferase B (NatB) complex.

Its subcellular location is the lysosome. Its function is as follows. Non-catalytic subunit of the NatB complex which catalyzes acetylation of the N-terminal methionine residues of proteins beginning with Met-Asp or Met-Glu. Has 2 roles in the larval immune response: required both for the phagocytic degradation of internalized bacteria and for the induction of Defensin in the fat body. Within the phagocytic blood cells, has a role in detection of infection and activation of the humoral immune response. The protein is Phagocyte signaling-impaired protein of Drosophila pseudoobscura pseudoobscura (Fruit fly).